A 443-amino-acid chain; its full sequence is MARQNRFDRTSFQTQIIDLSHDGRGVARPHGEGDKVTFVTGALPGEVVIVEPVARNRHFDEARVVEVLQASPQRVIPRCSHFGVCSGCVLQHLAEDAQVVSKQRVLLESLERIGRVSPERVLPALAAESWGYRRKGRFSVRWVEKKGRTLVGFREHDPRFVADVSVCHTVVPQVGEKIALLATLLNSLDGRRDVPQIEFIAGDAVVALTVRHLQPLSEADRLALIEFGKEHGIAIFLQSGGVESVRLLWPDEVLLAFRLKPWDVEFVFRPLDFIQINGGLNEKMIAHALDLLGAGFGERVLDLFCGLGNFTLPLARTVDEVVGVEGDIGLVERARENARRNGLGNAEFFVADLTRDQRDAPWMRQGFDKLLLDPPRSGAIEVLKQLPLKMFERIVYVSCHPGSLARDADFLVNEQGFVLRAVGAMDMFPHTAHVESIAVFDRC.

In terms of domain architecture, TRAM spans 4-66 (QNRFDRTSFQ…RHFDEARVVE (63 aa)). [4Fe-4S] cluster-binding residues include Cys79, Cys85, Cys88, and Cys167. Gln275, Phe304, Asn309, Glu325, Asp352, and Asp373 together coordinate S-adenosyl-L-methionine. The active-site Nucleophile is the Cys399.

The protein belongs to the class I-like SAM-binding methyltransferase superfamily. RNA M5U methyltransferase family. RlmD subfamily.

It carries out the reaction uridine(1939) in 23S rRNA + S-adenosyl-L-methionine = 5-methyluridine(1939) in 23S rRNA + S-adenosyl-L-homocysteine + H(+). Functionally, catalyzes the formation of 5-methyl-uridine at position 1939 (m5U1939) in 23S rRNA. The protein is 23S rRNA (uracil(1939)-C(5))-methyltransferase RlmD of Xylella fastidiosa (strain 9a5c).